A 435-amino-acid chain; its full sequence is MYDSVKGFRDFYPKEMQARRWAMDTLEDVAQRYGFREIGTPALEPTEMYVDKSGEEIVEELYSFEDKGGRKVALTPELTPTVARMFVAKQQELSKPIKWVSTRPFWRYEEPQQGRFREFYQTNVDIFGSAEPTADAEILAVAVDMLTDLGLTGEDFEIRVSHRDILSGVLESFEADVDVPEAIRAVDKRAKVDHDEYLDALAEAGLSYGQADTFDEMLQIDAEEIETLGDLTGSEDVRTATDNLQAVLDAAEDFGVREHLTVSLTTARGLDYYTGVVFECFDSTGEVSRSVFGGGRYDDLIEGFGGQPTPAVGFAPGHATLQLLCQRAGVWPAEELSTDYYVLQVGDTRPTAARIARDLRERGHVVESDVADRSFGAQMGYADGINAETVVIVGEQDLENDEVTLKEMDDGEQVSVPLSAFPGDYDRPTFEDFAE.

The tract at residues serine 415–glutamate 435 is disordered. The segment covering aspartate 424–glutamate 435 has biased composition (basic and acidic residues).

This sequence belongs to the class-II aminoacyl-tRNA synthetase family.

Its subcellular location is the cytoplasm. The enzyme catalyses tRNA(His) + L-histidine + ATP = L-histidyl-tRNA(His) + AMP + diphosphate + H(+). This Haloarcula marismortui (strain ATCC 43049 / DSM 3752 / JCM 8966 / VKM B-1809) (Halobacterium marismortui) protein is Histidine--tRNA ligase.